A 55-amino-acid polypeptide reads, in one-letter code: Sec-independent protein translocase protein TatA (55 aa).

A helical membrane pass occupies residues 1–21 (MSLGPWQLFLVLIIILVLFGA).

This sequence belongs to the TatA/E family. In terms of assembly, the Tat system comprises two distinct complexes: a TatABC complex, containing multiple copies of TatA, TatB and TatC subunits, and a separate TatA complex, containing only TatA subunits. Substrates initially bind to the TatABC complex, which probably triggers association of the separate TatA complex to form the active translocon.

Its subcellular location is the cell membrane. Functionally, part of the twin-arginine translocation (Tat) system that transports large folded proteins containing a characteristic twin-arginine motif in their signal peptide across membranes. TatA could form the protein-conducting channel of the Tat system. The polypeptide is Sec-independent protein translocase protein TatA (Wolbachia pipientis wMel).